A 182-amino-acid polypeptide reads, in one-letter code: ATP-dependent protease subunit HslV (182 aa).

Thr10 is an active-site residue. Residues Ala166, Cys169, and Ser172 each contribute to the Na(+) site.

This sequence belongs to the peptidase T1B family. HslV subfamily. A double ring-shaped homohexamer of HslV is capped on each side by a ring-shaped HslU homohexamer. The assembly of the HslU/HslV complex is dependent on binding of ATP.

The protein localises to the cytoplasm. The catalysed reaction is ATP-dependent cleavage of peptide bonds with broad specificity.. Its activity is regulated as follows. Allosterically activated by HslU binding. Its function is as follows. Protease subunit of a proteasome-like degradation complex believed to be a general protein degrading machinery. The polypeptide is ATP-dependent protease subunit HslV (Rickettsia prowazekii (strain Madrid E)).